A 376-amino-acid polypeptide reads, in one-letter code: Chaperone protein DnaJ (376 aa).

Residues 5-69 (DYYEILGVDR…EKRARYDRFG (65 aa)) enclose the J domain. A CR-type zinc finger spans residues 135-217 (GLETDIRVPH…CNGKGVVRKT (83 aa)). 8 residues coordinate Zn(2+): cysteine 148, cysteine 151, cysteine 165, cysteine 168, cysteine 191, cysteine 194, cysteine 205, and cysteine 208. CXXCXGXG motif repeat units follow at residues 148 to 155 (CPVCHGSR), 165 to 172 (CQTCGGSG), 191 to 198 (CPDCQGEG), and 205 to 212 (CSNCNGKG).

Belongs to the DnaJ family. Homodimer. It depends on Zn(2+) as a cofactor.

It localises to the cytoplasm. Functionally, participates actively in the response to hyperosmotic and heat shock by preventing the aggregation of stress-denatured proteins and by disaggregating proteins, also in an autonomous, DnaK-independent fashion. Unfolded proteins bind initially to DnaJ; upon interaction with the DnaJ-bound protein, DnaK hydrolyzes its bound ATP, resulting in the formation of a stable complex. GrpE releases ADP from DnaK; ATP binding to DnaK triggers the release of the substrate protein, thus completing the reaction cycle. Several rounds of ATP-dependent interactions between DnaJ, DnaK and GrpE are required for fully efficient folding. Also involved, together with DnaK and GrpE, in the DNA replication of plasmids through activation of initiation proteins. The polypeptide is Chaperone protein DnaJ (Methanothermobacter thermautotrophicus (strain ATCC 29096 / DSM 1053 / JCM 10044 / NBRC 100330 / Delta H) (Methanobacterium thermoautotrophicum)).